We begin with the raw amino-acid sequence, 108 residues long: MIKTTLLFFATALCEIIGCFLPWLWLKRNASIWLLLPAGISLALFVWLLTLHPAASGRVYAAYGGVYVCTALIWLRVVDGVKLSLYDWTGALIALCGMLIIVAGWGRT.

At Met-1–Thr-5 the chain is on the periplasmic side. The chain crosses the membrane as a helical span at residues Leu-6–Leu-26. Topologically, residues Lys-27–Ala-30 are cytoplasmic. Residues Ser-31–Leu-51 traverse the membrane as a helical segment. Topologically, residues His-52–Tyr-60 are periplasmic. A helical membrane pass occupies residues Ala-61 to Val-81. Over Lys-82 to Ser-84 the chain is Cytoplasmic. A helical transmembrane segment spans residues Leu-85–Trp-105. Residues Gly-106–Thr-108 lie on the Periplasmic side of the membrane.

Belongs to the UPF0060 family.

It localises to the cell inner membrane. This Escherichia coli (strain SMS-3-5 / SECEC) protein is UPF0060 membrane protein YnfA.